Here is a 90-residue protein sequence, read N- to C-terminus: Small ribosomal subunit protein bS18A (90 aa).

Belongs to the bacterial ribosomal protein bS18 family. Part of the 30S ribosomal subunit. Forms a tight heterodimer with protein bS6.

Functionally, binds as a heterodimer with protein bS6 to the central domain of the 16S rRNA, where it helps stabilize the platform of the 30S subunit. This Roseiflexus castenholzii (strain DSM 13941 / HLO8) protein is Small ribosomal subunit protein bS18A.